The following is a 265-amino-acid chain: Putative carbamate hydrolase RutD (265 aa).

One can recognise an AB hydrolase-1 domain in the interval 14 to 123; it reads PTLVLSSGLG…WSSPNPHSAR (110 aa).

It belongs to the AB hydrolase superfamily. Hydrolase RutD family.

It carries out the reaction carbamate + 2 H(+) = NH4(+) + CO2. In terms of biological role, involved in pyrimidine catabolism. May facilitate the hydrolysis of carbamate, a reaction that can also occur spontaneously. This chain is Putative carbamate hydrolase RutD, found in Stutzerimonas stutzeri (strain A1501) (Pseudomonas stutzeri).